Consider the following 147-residue polypeptide: CLAVATA3/ESR (CLE)-related protein 4C (147 aa).

The first 21 residues, 1–21, serve as a signal peptide directing secretion; the sequence is MATNTMLCLFVISVVLALAFA. The required for secretion from the host cytoplasm to the host apoplasm stretch occupies residues 21–83; sequence ATNKKGDEEP…SNQLPNNNWM (63 aa). An N-linked (GlcNAc...) asparagine glycan is attached at N32. Disordered regions lie at residues 57-86 and 116-147; these read GADATRGGGAVYGGNLKSNQLPNNNWMAPP and RKTGMHSQRHHEETTLEQEKRVAGAGPDPIHH. Residues 125–137 are compositionally biased toward basic and acidic residues; sequence HHEETTLEQEKRV. The CLE signature appears at 136–147; sequence RVAGAGPDPIHH.

This sequence belongs to the CLV3/ESR signal peptide family. In terms of tissue distribution, highly expressed exclusively within the dorsal esophageal gland cell during syncytium formation in host plants.

It is found in the secreted. It localises to the host cytoplasm. The protein localises to the host extracellular space. Its subcellular location is the extracellular space. The protein resides in the apoplast. Its function is as follows. Mimics host plant CLE extracellular signal peptides that regulate cell fate. May play a role in the differentiation or division of feeding cells (syncytia) induced in plant roots during infection. The protein is CLAVATA3/ESR (CLE)-related protein 4C (CLE-4C) of Globodera rostochiensis (Golden nematode worm).